A 354-amino-acid chain; its full sequence is Clavesin-1 (354 aa).

A CRAL-TRIO domain is found at 118 to 279 (IKRALIDGFP…EFGGTLPPYD (162 aa)). The disordered stretch occupies residues 317-354 (RECSPKPMKRSQSVVEAGTLKHEEKGENENTQPLLALD). A compositionally biased stretch (basic and acidic residues) spans 335 to 344 (TLKHEEKGEN). The segment covering 345–354 (ENTQPLLALD) has biased composition (polar residues).

Forms a complex with clathrin heavy chain and gamma-adaptin. As to expression, expressed in brain with no expression detected in non-neuronal tissues (at protein level).

It localises to the golgi apparatus. The protein localises to the trans-Golgi network membrane. Its subcellular location is the early endosome membrane. The protein resides in the cytoplasmic vesicle. It is found in the clathrin-coated vesicle. Required for normal morphology of late endosomes and/or lysosomes in neurons. Binds phosphatidylinositol 3,5-bisphosphate (PtdIns(3,5)P2). This is Clavesin-1 from Rattus norvegicus (Rat).